The following is a 911-amino-acid chain: Viral IRF4-like protein (911 aa).

The segment at residues 7 to 114 (SEWATLWIID…GSYVVWQLVR (108 aa)) is a DNA-binding region (IRF tryptophan pentad repeat). 4 disordered regions span residues 147–184 (TTATRRSDTREQSYEEAGAAAPAPPKAPSGLRGRPRKS), 211–302 (ASTS…SRLP), 494–537 (GGAP…PYVC), and 681–727 (ELQE…FFDP). Low complexity predominate over residues 211-221 (ASTSGMGSSGT). 2 stretches are compositionally biased toward polar residues: residues 222–231 (RQVTQASSFT) and 495–505 (GAPNQGLSHTQ). A compositionally biased stretch (basic residues) spans 697–710 (RRPRSRSPHGRRTP).

This sequence belongs to the IRF family. In terms of assembly, interacts with host MDM2; this interaction facilitates the proteasomal degradation of TP53/p53. Interacts with host IRF7; this interaction prevents IRF7 dimerization and subsequent activation.

It is found in the host nucleus. Functionally, plays a role in host cell apoptosis modulation by promoting TP53/p53 ubiquitination and subsequent degradation and thus down-regulating TP53/p53-mediated apoptosis. Works as a potential viral transcription factor to modulate host gene expression to build favorable environments for the viral lytic life cycle and greatly accelerates the induction of an immediate early gene RTA, early genes ORF36 and ORF57, late genes ORF25 and ORF64, and latent genes LANA1 and v-IRF3. Inhibits host interferon-alpha production by interacting with host IRF7 and preventing IRF7 dimerization. This is Viral IRF4-like protein (vIRF-4) from Homo sapiens (Human).